Consider the following 436-residue polypeptide: Adenylosuccinate synthetase (436 aa).

Residues 12–18 and 40–42 each bind GTP; these read GDEGKGK and GHT. Residue aspartate 13 is the Proton acceptor of the active site. Mg(2+) contacts are provided by aspartate 13 and glycine 40. IMP is bound by residues 13–16, 38–41, threonine 128, arginine 142, glutamine 223, threonine 238, and arginine 302; these read DEGK and NAGH. Histidine 41 functions as the Proton donor in the catalytic mechanism. Residue 298–304 participates in substrate binding; sequence TTTGRRR. Residues arginine 304, 330–332, and 412–414 each bind GTP; these read KLD and SLG.

Belongs to the adenylosuccinate synthetase family. In terms of assembly, homodimer. Mg(2+) is required as a cofactor.

It is found in the cytoplasm. It carries out the reaction IMP + L-aspartate + GTP = N(6)-(1,2-dicarboxyethyl)-AMP + GDP + phosphate + 2 H(+). It functions in the pathway purine metabolism; AMP biosynthesis via de novo pathway; AMP from IMP: step 1/2. Its function is as follows. Plays an important role in the de novo pathway of purine nucleotide biosynthesis. Catalyzes the first committed step in the biosynthesis of AMP from IMP. The polypeptide is Adenylosuccinate synthetase (Prochlorococcus marinus (strain MIT 9215)).